A 37-amino-acid polypeptide reads, in one-letter code: Large ribosomal subunit protein bL36c (37 aa).

It belongs to the bacterial ribosomal protein bL36 family.

The protein localises to the plastid. It localises to the chloroplast. This is Large ribosomal subunit protein bL36c from Lolium perenne (Perennial ryegrass).